The primary structure comprises 1423 residues: DNA-directed RNA polymerase subunit beta' (1423 aa).

Zn(2+) contacts are provided by Cys71, Cys73, Cys86, and Cys89. Residues Asp461, Asp463, and Asp465 each coordinate Mg(2+). Residues Cys815, Cys889, Cys896, and Cys899 each contribute to the Zn(2+) site.

This sequence belongs to the RNA polymerase beta' chain family. The RNAP catalytic core consists of 2 alpha, 1 beta, 1 beta' and 1 omega subunit. When a sigma factor is associated with the core the holoenzyme is formed, which can initiate transcription. Requires Mg(2+) as cofactor. Zn(2+) is required as a cofactor.

The catalysed reaction is RNA(n) + a ribonucleoside 5'-triphosphate = RNA(n+1) + diphosphate. Its function is as follows. DNA-dependent RNA polymerase catalyzes the transcription of DNA into RNA using the four ribonucleoside triphosphates as substrates. In Actinobacillus pleuropneumoniae serotype 7 (strain AP76), this protein is DNA-directed RNA polymerase subunit beta'.